A 166-amino-acid chain; its full sequence is Cyanate hydratase (166 aa).

Active-site residues include arginine 92, glutamate 95, and serine 118.

This sequence belongs to the cyanase family.

The enzyme catalyses cyanate + hydrogencarbonate + 3 H(+) = NH4(+) + 2 CO2. Catalyzes the reaction of cyanate with bicarbonate to produce ammonia and carbon dioxide. The protein is Cyanate hydratase of Sorghum bicolor (Sorghum).